The following is a 903-amino-acid chain: Translation initiation factor IF-2 (903 aa).

The disordered stretch occupies residues 66-296 (QATLKGEGPV…GRSRKREMEN (231 aa)). Residues 121 to 132 (NTDETRVQEHKP) are compositionally biased toward basic and acidic residues. Low complexity-rich tracts occupy residues 139–152 (AGDA…AAAG) and 178–195 (AATG…GQQS). Over residues 204–231 (EGRSRQDENKGSAREDQANRFATRDKEA) the composition is skewed to basic and acidic residues. Over residues 246–255 (RRPAHSKPLR) the composition is skewed to basic residues. Basic and acidic residues-rich tracts occupy residues 263 to 276 (VTKD…DRSN) and 285 to 296 (ESGRSRKREMEN). Residues 403–572 (ERPPVVTVMG…LLTADVAELK (170 aa)) form the tr-type G domain. The interval 412-419 (GHVDHGKT) is G1. 412-419 (GHVDHGKT) contributes to the GTP binding site. Residues 437-441 (GITQH) are G2. Residues 458–461 (DTPG) form a G3 region. GTP contacts are provided by residues 458-462 (DTPGH) and 512-515 (NKID). Residues 512–515 (NKID) form a G4 region. The interval 548–550 (SAV) is G5.

The protein belongs to the TRAFAC class translation factor GTPase superfamily. Classic translation factor GTPase family. IF-2 subfamily.

It localises to the cytoplasm. In terms of biological role, one of the essential components for the initiation of protein synthesis. Protects formylmethionyl-tRNA from spontaneous hydrolysis and promotes its binding to the 30S ribosomal subunits. Also involved in the hydrolysis of GTP during the formation of the 70S ribosomal complex. The polypeptide is Translation initiation factor IF-2 (Moorella thermoacetica (strain ATCC 39073 / JCM 9320)).